The primary structure comprises 102 residues: Large ribosomal subunit protein uL24 (102 aa).

Belongs to the universal ribosomal protein uL24 family. As to quaternary structure, part of the 50S ribosomal subunit.

Its function is as follows. One of two assembly initiator proteins, it binds directly to the 5'-end of the 23S rRNA, where it nucleates assembly of the 50S subunit. Functionally, one of the proteins that surrounds the polypeptide exit tunnel on the outside of the subunit. In Herpetosiphon aurantiacus (strain ATCC 23779 / DSM 785 / 114-95), this protein is Large ribosomal subunit protein uL24.